The chain runs to 180 residues: Pro-glucagon (180 aa).

The signal sequence occupies residues 1–20 (MKSIYFVAGLFVMLVQGSWQ). The tract at residues 26–56 (TEEKSRSFSAPQTEPLNDLDQMNEDKRHSQG) is disordered. Phosphoserine is present on Ser-54. The propeptide occupies 84–89 (NKNNIA). 2 positions are modified to phosphoserine: Ser-105 and Ser-108. Arg-127 is modified (arginine amide). A propeptide spanning residues 131 to 145 (DFPEEVAIVEEFRRR) is cleaved from the precursor. A phosphoserine mark is found at Ser-150 and Ser-152.

Belongs to the glucagon family. Proglucagon is post-translationally processed in a tissue-specific manner in pancreatic A cells and intestinal L cells. In pancreatic A cells, the major bioactive hormone is glucagon cleaved by PCSK2/PC2. In the intestinal L cells PCSK1/PC1 liberates GLP-1, GLP-2, glicentin and oxyntomodulin. GLP-1 is further N-terminally truncated by post-translational processing in the intestinal L cells resulting in GLP-1(7-37) GLP-1-(7-36)amide. The C-terminal amidation is neither important for the metabolism of GLP-1 nor for its effects on the endocrine pancreas. As to expression, glucagon is secreted in the A cells of the islets of Langerhans. GLP-1, GLP-2, oxyntomodulin and glicentin are secreted from enteroendocrine cells throughout the gastrointestinal tract. GLP-1 and GLP-2 are also secreted in selected neurons in the brain.

Its subcellular location is the secreted. Its function is as follows. Plays a key role in glucose metabolism and homeostasis. Regulates blood glucose by increasing gluconeogenesis and decreasing glycolysis. A counterregulatory hormone of insulin, raises plasma glucose levels in response to insulin-induced hypoglycemia. Plays an important role in initiating and maintaining hyperglycemic conditions in diabetes. In terms of biological role, potent stimulator of glucose-dependent insulin release. Also stimulates insulin release in response to IL6. Plays important roles on gastric motility and the suppression of plasma glucagon levels. May be involved in the suppression of satiety and stimulation of glucose disposal in peripheral tissues, independent of the actions of insulin. Has growth-promoting activities on intestinal epithelium. May also regulate the hypothalamic pituitary axis (HPA) via effects on LH, TSH, CRH, oxytocin, and vasopressin secretion. Increases islet mass through stimulation of islet neogenesis and pancreatic beta cell proliferation. Inhibits beta cell apoptosis. Stimulates intestinal growth and up-regulates villus height in the small intestine, concomitant with increased crypt cell proliferation and decreased enterocyte apoptosis. The gastrointestinal tract, from the stomach to the colon is the principal target for GLP-2 action. Plays a key role in nutrient homeostasis, enhancing nutrient assimilation through enhanced gastrointestinal function, as well as increasing nutrient disposal. Stimulates intestinal glucose transport and decreases mucosal permeability. Functionally, significantly reduces food intake. Inhibits gastric emptying in humans. Suppression of gastric emptying may lead to increased gastric distension, which may contribute to satiety by causing a sensation of fullness. Its function is as follows. May modulate gastric acid secretion and the gastro-pyloro-duodenal activity. May play an important role in intestinal mucosal growth in the early period of life. The chain is Pro-glucagon (GCG) from Canis lupus familiaris (Dog).